The primary structure comprises 190 residues: Early nodulin-like protein 12 (190 aa).

An N-terminal signal peptide occupies residues 1 to 21 (MGIIVPVLTLVFLLFAKVSHG). Residues 26–130 (RVILVGGSVG…GEKITLVVLA (105 aa)) form the Phytocyanin domain. An N-linked (GlcNAc...) asparagine glycan is attached at Asn-44. Cys-84 and Cys-118 are disulfide-bonded. A disordered region spans residues 135 to 164 (GGGSSSGDAPKVSPVSPTAQTPAPAPGPAA). Over residues 151-164 (PTAQTPAPAPGPAA) the composition is skewed to low complexity. A lipid anchor (GPI-anchor amidated asparagine) is attached at Asn-167. Positions 168–190 (AAVGLKVASGWFLTAVVVGLAMA) are cleaved as a propeptide — removed in mature form.

The protein belongs to the early nodulin-like (ENODL) family. In terms of tissue distribution, confined to flowers and siliques. Expressed in female gametophytes.

The protein localises to the cell membrane. Functionally, may act as a carbohydrate transporter. Required, together with ENODL11, ENODL12, ENODL13, ENODL14 and ENODL15, for male-female communication and pollen tube reception and burst at the synergid cell surface of the female gametophyte. The chain is Early nodulin-like protein 12 from Arabidopsis thaliana (Mouse-ear cress).